Reading from the N-terminus, the 379-residue chain is MTPPHNYLAVIKVVGIGGGGVNAVNRMIEQGLKGVEFIAINTDAQALLMSDADVKLDVGRDSTRGLGAGADPEVGRKAAEDAKDEIEELLRGADMVFVTAGEGGGTGTGGAPVVASIARKLGALTVGVVTRPFSFEGKRRSNQAENGIAALRESCDTLIVIPNDRLLQMGDAAVSLMDAFRSADEVLLNGVQGITDLITTPGLINVDFADVKGIMSGAGTALMGIGSARGEGRSLKAAEIAINSPLLEASMEGAQGVLMSIAGGSDLGLFEINEAASLVQDAAHPDANIIFGTVIDDSLGDEVRVTVIAAGFDVSGPGRKPVMGETGGAHRIESAKAGKLTSTLFEPVDAVSVPLHTNGATLSIGGDDDDVDVPPFMRR.

Residues 18-22 (GGGVN), 105-107 (GTG), E136, R140, and D184 contribute to the GTP site.

Belongs to the FtsZ family. As to quaternary structure, homodimer. Polymerizes to form a dynamic ring structure in a strictly GTP-dependent manner. Interacts directly with several other division proteins.

The protein localises to the cytoplasm. Functionally, essential cell division protein that forms a contractile ring structure (Z ring) at the future cell division site. The regulation of the ring assembly controls the timing and the location of cell division. One of the functions of the FtsZ ring is to recruit other cell division proteins to the septum to produce a new cell wall between the dividing cells. Binds GTP and shows GTPase activity. In Mycobacterium bovis (strain ATCC BAA-935 / AF2122/97), this protein is Cell division protein FtsZ.